Reading from the N-terminus, the 202-residue chain is Small ribosomal subunit protein uS4c (202 aa).

The S4 RNA-binding domain occupies 90–153 (MRLDNIIFRL…KSQAIISKNL (64 aa)).

This sequence belongs to the universal ribosomal protein uS4 family. Part of the 30S ribosomal subunit. Contacts protein S5. The interaction surface between S4 and S5 is involved in control of translational fidelity.

Its subcellular location is the plastid. It localises to the chloroplast. In terms of biological role, one of the primary rRNA binding proteins, it binds directly to 16S rRNA where it nucleates assembly of the body of the 30S subunit. With S5 and S12 plays an important role in translational accuracy. The polypeptide is Small ribosomal subunit protein uS4c (rps4) (Rosulabryum capillare (Capillary thread-moss)).